Reading from the N-terminus, the 66-residue chain is UPF0370 protein YpfN (66 aa).

A helical transmembrane segment spans residues 4-24 (LAKYWWILVLVFLVGVLLNVI). Residues 39–66 (KPELPPHRDFNDKWDDEDDWPKKDQSKK) form a disordered region. A compositionally biased stretch (basic and acidic residues) spans 42–51 (LPPHRDFNDK).

Belongs to the UPF0370 family.

Its subcellular location is the cell membrane. The protein is UPF0370 protein YpfN of Salmonella arizonae (strain ATCC BAA-731 / CDC346-86 / RSK2980).